Reading from the N-terminus, the 257-residue chain is Diphthine synthase (257 aa).

Residues L9, D86, V89, 114-115 (SI), L166, A207, and H232 each bind S-adenosyl-L-methionine.

It belongs to the diphthine synthase family. Homodimer.

It catalyses the reaction 2-[(3S)-amino-3-carboxypropyl]-L-histidyl-[translation elongation factor 2] + 3 S-adenosyl-L-methionine = diphthine-[translation elongation factor 2] + 3 S-adenosyl-L-homocysteine + 3 H(+). It participates in protein modification; peptidyl-diphthamide biosynthesis. Its function is as follows. S-adenosyl-L-methionine-dependent methyltransferase that catalyzes the trimethylation of the amino group of the modified target histidine residue in translation elongation factor 2 (EF-2), to form an intermediate called diphthine. The three successive methylation reactions represent the second step of diphthamide biosynthesis. The sequence is that of Diphthine synthase from Methanocella arvoryzae (strain DSM 22066 / NBRC 105507 / MRE50).